The chain runs to 218 residues: Superoxide dismutase [Mn], mitochondrial (218 aa).

Mn(2+)-binding residues include histidine 27, histidine 84, aspartate 174, and histidine 178.

Belongs to the iron/manganese superoxide dismutase family. Homotetramer. Requires Mn(2+) as cofactor.

It localises to the mitochondrion matrix. The catalysed reaction is 2 superoxide + 2 H(+) = H2O2 + O2. Functionally, destroys superoxide anion radicals which are normally produced within the cells and which are toxic to biological systems. In Chlamydomonas reinhardtii (Chlamydomonas smithii), this protein is Superoxide dismutase [Mn], mitochondrial (SODA).